The sequence spans 199 residues: V-type ATP synthase subunit E (199 aa).

It belongs to the V-ATPase E subunit family.

Its function is as follows. Produces ATP from ADP in the presence of a proton gradient across the membrane. The polypeptide is V-type ATP synthase subunit E (Borrelia garinii subsp. bavariensis (strain ATCC BAA-2496 / DSM 23469 / PBi) (Borreliella bavariensis)).